Reading from the N-terminus, the 178-residue chain is Fatty-acid and retinol-binding protein 1 (178 aa).

The signal sequence occupies residues 1-16 (MYHQLILMALIGVIMA). Coiled-coil stretches lie at residues 67 to 89 (DAALEALKNKSDKLYQKAVELRN) and 122 to 154 (QKLDMEKLKQAARDIIAKYEALNEETKEELKAT).

Belongs to the fatty-acid and retinol-binding protein (FARBP) family. In terms of processing, not glycosylated.

It localises to the secreted. Binds retinol and different fatty acids. The protein is Fatty-acid and retinol-binding protein 1 of Litomosoides sigmodontis (Filarial nematode worm).